The chain runs to 485 residues: Chromosomal replication initiator protein DnaA (485 aa).

A domain I, interacts with DnaA modulators region spans residues 1 to 74 (MEKSKNIWSL…ILTNNGYDNV (74 aa)). The tract at residues 74 to 140 (VTIVFTNQSP…EEEPKNFKNP (67 aa)) is domain II. The tract at residues 141–357 (FLKKRYTFEN…AAVTKLKAYI (217 aa)) is domain III, AAA+ region. ATP contacts are provided by Gly185, Gly187, Lys188, and Thr189. The segment at 358–485 (DLDNIEIDID…TELMNKIKKN (128 aa)) is domain IV, binds dsDNA.

It belongs to the DnaA family. As to quaternary structure, oligomerizes as a right-handed, spiral filament on DNA at oriC.

The protein resides in the cytoplasm. In terms of biological role, plays an essential role in the initiation and regulation of chromosomal replication. ATP-DnaA binds to the origin of replication (oriC) to initiate formation of the DNA replication initiation complex once per cell cycle. Binds the DnaA box (a 9 base pair repeat at the origin) and separates the double-stranded (ds)DNA. Forms a right-handed helical filament on oriC DNA; dsDNA binds to the exterior of the filament while single-stranded (ss)DNA is stabiized in the filament's interior. The ATP-DnaA-oriC complex binds and stabilizes one strand of the AT-rich DNA unwinding element (DUE), permitting loading of DNA polymerase. After initiation quickly degrades to an ADP-DnaA complex that is not apt for DNA replication. Binds acidic phospholipids. The protein is Chromosomal replication initiator protein DnaA of Borreliella afzelii (strain PKo) (Borrelia afzelii).